We begin with the raw amino-acid sequence, 338 residues long: Ketol-acid reductoisomerase (NADP(+)) (338 aa).

One can recognise a KARI N-terminal Rossmann domain in the interval 1–181 (MKVFYDKDCD…GGGRTGIIET (181 aa)). NADP(+) is bound by residues 24 to 27 (YGSQ), Arg-47, Ser-50, Thr-52, and 82 to 85 (DEFQ). His-107 is an active-site residue. Gly-133 contributes to the NADP(+) binding site. Residues 182-327 (TFKDETETDL…EQLRSMMPWI (146 aa)) form the KARI C-terminal knotted domain. Mg(2+) is bound by residues Asp-190, Glu-194, Glu-226, and Glu-230. Ser-251 serves as a coordination point for substrate.

Belongs to the ketol-acid reductoisomerase family. The cofactor is Mg(2+).

The catalysed reaction is (2R)-2,3-dihydroxy-3-methylbutanoate + NADP(+) = (2S)-2-acetolactate + NADPH + H(+). The enzyme catalyses (2R,3R)-2,3-dihydroxy-3-methylpentanoate + NADP(+) = (S)-2-ethyl-2-hydroxy-3-oxobutanoate + NADPH + H(+). It participates in amino-acid biosynthesis; L-isoleucine biosynthesis; L-isoleucine from 2-oxobutanoate: step 2/4. It functions in the pathway amino-acid biosynthesis; L-valine biosynthesis; L-valine from pyruvate: step 2/4. Involved in the biosynthesis of branched-chain amino acids (BCAA). Catalyzes an alkyl-migration followed by a ketol-acid reduction of (S)-2-acetolactate (S2AL) to yield (R)-2,3-dihydroxy-isovalerate. In the isomerase reaction, S2AL is rearranged via a Mg-dependent methyl migration to produce 3-hydroxy-3-methyl-2-ketobutyrate (HMKB). In the reductase reaction, this 2-ketoacid undergoes a metal-dependent reduction by NADPH to yield (R)-2,3-dihydroxy-isovalerate. This Pseudomonas entomophila (strain L48) protein is Ketol-acid reductoisomerase (NADP(+)).